Here is a 111-residue protein sequence, read N- to C-terminus: Ribonuclease P protein component (111 aa).

The protein belongs to the RnpA family. In terms of assembly, consists of a catalytic RNA component (M1 or rnpB) and a protein subunit.

It carries out the reaction Endonucleolytic cleavage of RNA, removing 5'-extranucleotides from tRNA precursor.. RNaseP catalyzes the removal of the 5'-leader sequence from pre-tRNA to produce the mature 5'-terminus. It can also cleave other RNA substrates such as 4.5S RNA. The protein component plays an auxiliary but essential role in vivo by binding to the 5'-leader sequence and broadening the substrate specificity of the ribozyme. This Alkaliphilus metalliredigens (strain QYMF) protein is Ribonuclease P protein component.